Consider the following 120-residue polypeptide: Small ribosomal subunit protein uS13 (120 aa).

Residues 96-120 form a disordered region; it reads PCRGQRTRTNARTRKGPRKAIAGKK.

The protein belongs to the universal ribosomal protein uS13 family. Part of the 30S ribosomal subunit. Forms a loose heterodimer with protein S19. Forms two bridges to the 50S subunit in the 70S ribosome.

Functionally, located at the top of the head of the 30S subunit, it contacts several helices of the 16S rRNA. In the 70S ribosome it contacts the 23S rRNA (bridge B1a) and protein L5 of the 50S subunit (bridge B1b), connecting the 2 subunits; these bridges are implicated in subunit movement. Contacts the tRNAs in the A and P-sites. This Neisseria gonorrhoeae (strain ATCC 700825 / FA 1090) protein is Small ribosomal subunit protein uS13.